The primary structure comprises 1141 residues: MINRDNKKAITKKGMISNRLNKFSIRKYTVGTASILVGTTLIFGLGNQEAKAAENTSTENAKQDDATTSDNKEVVSETENNSTTENDSTNPIKKETNTDSQPEAKEESTTSSTQQQQNNVTATTETKPQNIEKENVKPSTDKTATEDTSVILEEKKAPNYTNNDVTTKPSTSEIQTKPTTPQESTNIENSQPQPTPSKVDNQVTDATNPKEPVNVSKEELKNNPEKLKELVRNDNNTDRSTKPVATAPTSVAPKRLNAKMRFAVAQPAAVASNNVNDLITVTKQTIKVGDGKDNVAAAHDGKDIEYDTEFTIDNKVKKGDTMTINYDKNVIPSDLTDKNDPIDITDPSGEVIAKGTFDKATKQITYTFTDYVDKYEDIKARLTLYSYIDKQAVPNETSLNLTFATAGKETSQNVSVDYQDPMVHGDSNIQSIFTKLDENKQTIEQQIYVNPLKKTATNTKVDIAGSQVDDYGNIKLGNGSTIIDQNTEIKVYKVNPNQQLPQSNRIYDFSQYEDVTSQFDNKKSFSNNVATLDFGDINSAYIIKVVSKYTPTSDGELDIAQGTSMRTTDKYGYYNYAGYSNFIVTSNDTGGGDGTVKPEEKLYKIGDYVWEDVDKDGVQGTDSKEKPMANVLVTLTYPDGTTKSVRTDANGHYEFGGLKDGETYTVKFETPAGYLPTKVNGTTDGEKDSNGSSITVKINGKDDMSLDTGFYKEPKYNLGDYVWEDTNKDGIQDANEPGIKDVKVTLKDSTGKVIGTTTTDASGKYKFTDLDNGNYTVEFETPAGYTPTVKNTTAEDKDSNGLTTTGVIKDADNMTLDSGFYKTPKYSLGDYVWYDSNKDGKQDSTEKGIKDVKVTLLNEKGEVIGTTKTDENGKYRFDNLDSGKYKVIFEKPAGLTQTVTNTTEDDKDADGGEVDVTITDHDDFILDNGYFEEDTSDSDSDSDSDSDSDSDSDSDSDSDSDSDSDSDSDSDSDSDSDSDSDSDSDSDSDSDSDSDSDSDSDSDSDSDSDSDSDSDSDSDSDSDSDSDSDSDSDSDSDSDSDSDSDSDSDSDSDSDSDSDSDSDSDSDSDSDSDSDSDSDSDAGKHTPVKPMSTTKDHHNKAKALPETGSENNGSNNATLFGGLFAALGSLLLFGRRKKQNK.

Positions 1-52 (MINRDNKKAITKKGMISNRLNKFSIRKYTVGTASILVGTTLIFGLGNQEAKA) are cleaved as a signal peptide. A YSIRK-G/S signaling motif motif is present at residues 23–34 (FSIRKYTVGTAS). The tract at residues 53 to 601 (AENTSTENAK…GDGTVKPEEK (549 aa)) is ligand binding A region. A disordered region spans residues 54-248 (ENTSTENAKQ…RSTKPVATAP (195 aa)). Basic and acidic residues predominate over residues 61–75 (AKQDDATTSDNKEVV). Residues 77 to 90 (ETENNSTTENDSTN) are compositionally biased toward low complexity. Residues 92–108 (IKKETNTDSQPEAKEES) are compositionally biased toward basic and acidic residues. Residues 109–126 (TTSSTQQQQNNVTATTET) show a composition bias toward low complexity. Residues 130-145 (NIEKENVKPSTDKTAT) show a composition bias toward basic and acidic residues. A compositionally biased stretch (polar residues) spans 159–207 (NYTNNDVTTKPSTSEIQTKPTTPQESTNIENSQPQPTPSKVDNQVTDAT). Over residues 216 to 241 (SKEELKNNPEKLKELVRNDNNTDRST) the composition is skewed to basic and acidic residues. 3 CNA-B domains span residues 602–714 (LYKI…YKEP), 715–824 (KYNL…YKTP), and 825–935 (KYSL…EEDT). The disordered stretch occupies residues 929-1117 (GYFEEDTSDS…GSENNGSNNA (189 aa)). Positions 930–1080 (YFEEDTSDSD…DSDSDSDSDS (151 aa)) are enriched in acidic residues. The LPXTG sorting signal motif lies at 1104 to 1108 (LPETG). Threonine 1107 is subject to Pentaglycyl murein peptidoglycan amidated threonine. A propeptide spans 1108 to 1141 (GSENNGSNNATLFGGLFAALGSLLLFGRRKKQNK) (removed by sortase).

It belongs to the serine-aspartate repeat-containing protein (SDr) family. In terms of assembly, interacts with host complement factor H/CFAH (via C-terminus). Interacts with host complement regulator C4BPA.

The protein localises to the secreted. Its subcellular location is the cell wall. Its function is as follows. Cell surface-associated calcium-binding protein which plays an important role in adhesion and pathogenesis. Contributes to the resistance to killing by innate immune components in blood and thus attenuates bacterial clearance by interacting with host complement factor H/CFAH and modulating its activity. Inhibits also bacterial opsonization and killing by interacting with host complement regulator C4BPA and thus inhibiting classical complement pathway activation. This chain is Serine-aspartate repeat-containing protein E (sdrE), found in Staphylococcus aureus (strain Mu50 / ATCC 700699).